Reading from the N-terminus, the 535-residue chain is GMP synthase [glutamine-hydrolyzing] (535 aa).

One can recognise a Glutamine amidotransferase type-1 domain in the interval proline 20–aspartate 210. Cysteine 97 acts as the Nucleophile in catalysis. Residues histidine 184 and glutamate 186 contribute to the active site. The GMPS ATP-PPase domain maps to tryptophan 211–arginine 409. Residue serine 238 to alanine 244 participates in ATP binding.

As to quaternary structure, homodimer.

The enzyme catalyses XMP + L-glutamine + ATP + H2O = GMP + L-glutamate + AMP + diphosphate + 2 H(+). It functions in the pathway purine metabolism; GMP biosynthesis; GMP from XMP (L-Gln route): step 1/1. In terms of biological role, catalyzes the synthesis of GMP from XMP. In Bifidobacterium longum (strain NCC 2705), this protein is GMP synthase [glutamine-hydrolyzing].